Consider the following 340-residue polypeptide: MVATTSSGGSSVGWPSRLSGVRLHLVTGKGGTGKSTIAAALALTLAAGGRKVLLVEVEGRQGIAQLFDVPPLPYQELKIATAERGGQVNALAIDIEAAFLEYLDMFYNLGIAGRAMRRIGAVEFATTIAPGLRDVLLTGKIKETVVRLDKNKLPVYDAIVVDAPPTGRIARFLDVTKAVSDLAKGGPVHAQSEGVVKLLHSNQTAIHLVTLLEALPVQETLEAIEELAQMELPIGSVIVNRNIPAHLEPQDLAKAAEGEVDADSVRAGLLTAGVKLPDADFAGLLTETIQHATRITARAEIAQQLDALQVPRLELPTVSDGVDLGSLYELSESLAQQGVR.

Positions 31, 33, 34, 35, 36, 240, 316, and 318 each coordinate ATP.

The protein belongs to the arsA ATPase family. BagA/BagB subfamily. As to quaternary structure, forms a heterodimer composed of BagA and BagB. Interacts with Rv1509. Also interacts with a large number of proteins, including proteins required for mycolic acid biosynthesis.

With respect to regulation, the ATPase activity of the BagAB complex is not stimulated by antimonite, an arsenite substitute, suggesting that BagAB is not a transporter for this family of elements. In terms of biological role, component of the heterodimeric BagAB ATPase complex, whose two subunits are actively involved in ATP hydrolysis. The ATPase activity is required to mediate resistance against nitric oxide (NO) and elevated levels of glycerol. The chain is ATPase BagA from Mycobacterium tuberculosis (strain ATCC 25618 / H37Rv).